We begin with the raw amino-acid sequence, 392 residues long: Stilbene synthase 2 (392 aa).

Substrate is bound at residue 55 to 58; the sequence is KFNR. C164 is an active-site residue. Substrate contacts are provided by residues L267 and 305-307; that span reads GGP.

The protein belongs to the thiolase-like superfamily. Chalcone/stilbene synthases family. Homodimer.

The protein resides in the cytoplasm. The catalysed reaction is 4-coumaroyl-CoA + 3 malonyl-CoA + 3 H(+) = trans-resveratrol + 4 CO2 + 4 CoA. Its pathway is phytoalexin biosynthesis; 3,4',5-trihydroxystilbene biosynthesis; 3,4',5-trihydroxystilbene from trans-4-coumarate: step 2/2. Mediates resistance to pathogens which are sensitive to stilbenes. The sequence is that of Stilbene synthase 2 from Vitis vinifera (Grape).